The sequence spans 1104 residues: Reverse gyrase (1104 aa).

The RG N-terminal-type zinc-finger motif lies at 1 to 39; the sequence is MAVNSKYHHSCINCGGLNTDERNERGLPCEVCLPEDSPS. Zn(2+)-binding residues include cysteine 11, cysteine 14, cysteine 29, and cysteine 32. Residues phenylalanine 75, aspartate 78, glutamine 83, glycine 103, glycine 105, lysine 106, threonine 107, and threonine 108 each coordinate ADP. Residues glutamine 83 and 100–107 contribute to the ATP site; that span reads APTGVGKT. Residues 87 to 242 enclose the Helicase ATP-binding domain; that stretch reads AKRIVQGKSF…FSTIKQGKIY (156 aa). Positions 203-206 match the DEAD box motif; sequence DDVD. The segment at 223-250 is insert region; sequence GIPEEIIRKAFSTIKQGKIYERPKNLKP. The Helicase C-terminal domain occupies 300-522; sequence KLVELLEIFR…EAEANWKELV (223 aa). The segment at 390-460 is latch region; that stretch reads RFSLELDKAP…KDEDLELIIP (71 aa). Positions 538-1104 are topoisomerase I; the sequence is DTSRSLLIIV…EEIKSLMEEG (567 aa). The Toprim domain maps to 542–699; the sequence is SLLIIVESPT…SLRRIEMHEI (158 aa). Residue glutamate 548 coordinates Mg(2+). Residues 618–645 form an RG C-terminal-type zinc finger; sequence LKRCRDCGYQFTEDRDECPVCSSKNIDD. Cysteine 621, cysteine 624, cysteine 635, and cysteine 638 together coordinate Zn(2+). Aspartate 668 is a binding site for Mg(2+). Residues 715 to 1101 form the Topo IA-type catalytic domain; the sequence is DFNLVKAQIV…LLYEEIKSLM (387 aa). Catalysis depends on tyrosine 851, which acts as the O-(5'-phospho-DNA)-tyrosine intermediate.

It in the N-terminal section; belongs to the DEAD box helicase family. DDVD subfamily. This sequence in the C-terminal section; belongs to the type IA topoisomerase family. As to quaternary structure, monomer. Zn(2+) is required as a cofactor. The cofactor is Mg(2+).

It is found in the cytoplasm. The enzyme catalyses ATP + H2O = ADP + phosphate + H(+). Functionally, modifies the topological state of DNA by introducing positive supercoils in an ATP-dependent process. Increases the linking number in steps of +1. Probably recognizes regions with a low GC content which melt and form a ssDNA bubble, allowing the enzyme to bind and cleave the DNA prior to strand passage; the bubble is probably cleaved by 2 reverse gyrase molecules, one on each strand. Positively supercoils DNA with all NTPS, although it strongly prefers ATP. In the presence of non-hydrolyzable ATP analogs it partially relaxes negative supercoils. Has an intrinsic ATPase activity that is stimulated by DNA; ssDNA is most effective. Binds to single-stranded DNA, transiently cleaves and then rejoins the ends, introducing a positive supercoil in the process. The scissile phosphodiester is attacked by the catalytic tyrosine of the enzyme, resulting in the formation of a DNA-(5'-phosphotyrosyl)-enzyme intermediate. The helicase-like domain is a nucleotide-dependent switch that alternates between a physically closed ATP-bound state with a slight preference for dsDNA, and an open ADP-bound state with a high preference for ssDNA. Whole enzyme has a very poor (k-unwind=0.001 sec(-1)) non-processive helicase activity in the 3'-5' direction that works on short substrates, while the isolated helicase domain has a slightly better helicase activity that works in both directions. Probably involved in rewinding DNA strands in regions of the chromosome that have opened up to allow replication, transcription, DNA repair and/or for DNA protection. The polypeptide is Reverse gyrase (Thermotoga maritima (strain ATCC 43589 / DSM 3109 / JCM 10099 / NBRC 100826 / MSB8)).